Here is a 140-residue protein sequence, read N- to C-terminus: uncharacterized protein (140 aa).

Positions 3–131 (RLDHIGIAVF…NGVLVELCEP (129 aa)) constitute a VOC domain. Residues H6, E53, H77, and E127 each coordinate a divalent metal cation.

The protein belongs to the methylmalonyl-CoA epimerase family.

This is an uncharacterized protein from Bacillus subtilis (strain 168).